Here is a 330-residue protein sequence, read N- to C-terminus: Mucin-15 (330 aa).

The N-terminal stretch at 1–23 (MLTSAKILLISILSSLLLFGSHG) is a signal peptide. Positions 23–115 (GEEGQKTNTT…SPRSPSTHSF (93 aa)) are disordered. Over 24 to 232 (EEGQKTNTTE…SDPQEENRNT (209 aa)) the chain is Extracellular. Asn-30, Asn-44, Asn-54, Asn-71, Asn-79, Asn-89, Asn-94, Asn-122, Asn-138, Asn-147, Asn-154, Asn-162, Asn-175, Asn-214, and Asn-221 each carry an N-linked (GlcNAc...) asparagine glycan. Residues 42 to 56 (MENQSVPLESKANLT) show a composition bias toward polar residues. Polar residues predominate over residues 86-115 (FYSNLSTDNSSRSPSLMPTLSPRSPSTHSF). Residues 164–185 (SITVSNLPSGPNTTSVTPMVTE) form a disordered region. A helical transmembrane segment spans residues 233–253 (GVVFGAILGAILGASLLSLVG). The Cytoplasmic portion of the chain corresponds to 254 to 330 (YLLCGKRKTD…DDIPPLRTSV (77 aa)). A disordered region spans residues 279 to 330 (LRLDNAPEPYDMSFGNSSYYNPTANDSSTSAGGENAHDSIPMDDIPPLRTSV). A compositionally biased stretch (polar residues) spans 292–310 (FGNSSYYNPTANDSSTSAG).

In terms of processing, highly glycosylated (N- and O-linked carbohydrates). Mainly expressed on apical surfaces of the mammary epithelial cells.

The protein resides in the cell membrane. It is found in the secreted. This is Mucin-15 (MUC15) from Bos taurus (Bovine).